A 425-amino-acid chain; its full sequence is Histidine--tRNA ligase 2 (425 aa).

Belongs to the class-II aminoacyl-tRNA synthetase family. As to quaternary structure, homodimer.

It is found in the cytoplasm. The enzyme catalyses tRNA(His) + L-histidine + ATP = L-histidyl-tRNA(His) + AMP + diphosphate + H(+). In Shouchella clausii (strain KSM-K16) (Alkalihalobacillus clausii), this protein is Histidine--tRNA ligase 2.